A 126-amino-acid chain; its full sequence is Aspartate 1-decarboxylase (126 aa).

The Schiff-base intermediate with substrate; via pyruvic acid role is filled by S25. S25 is modified (pyruvic acid (Ser)). T57 is a binding site for substrate. Y58 (proton donor) is an active-site residue. 73–75 (GGA) is a binding site for substrate.

It belongs to the PanD family. Heterooctamer of four alpha and four beta subunits. Pyruvate serves as cofactor. Post-translationally, is synthesized initially as an inactive proenzyme, which is activated by self-cleavage at a specific serine bond to produce a beta-subunit with a hydroxyl group at its C-terminus and an alpha-subunit with a pyruvoyl group at its N-terminus.

It localises to the cytoplasm. It catalyses the reaction L-aspartate + H(+) = beta-alanine + CO2. It participates in cofactor biosynthesis; (R)-pantothenate biosynthesis; beta-alanine from L-aspartate: step 1/1. Catalyzes the pyruvoyl-dependent decarboxylation of aspartate to produce beta-alanine. The polypeptide is Aspartate 1-decarboxylase (Xanthomonas axonopodis pv. citri (strain 306)).